The following is a 203-amino-acid chain: Outer-membrane lipoprotein carrier protein (203 aa).

The N-terminal stretch at 1-21 is a signal peptide; it reads MKKLLVACCLLSGLISAHALA.

It belongs to the LolA family. As to quaternary structure, monomer.

It is found in the periplasm. Its function is as follows. Participates in the translocation of lipoproteins from the inner membrane to the outer membrane. Only forms a complex with a lipoprotein if the residue after the N-terminal Cys is not an aspartate (The Asp acts as a targeting signal to indicate that the lipoprotein should stay in the inner membrane). The sequence is that of Outer-membrane lipoprotein carrier protein from Yersinia enterocolitica serotype O:8 / biotype 1B (strain NCTC 13174 / 8081).